Here is a 187-residue protein sequence, read N- to C-terminus: UPF0398 protein LJ_1195 (187 aa).

Belongs to the UPF0398 family.

In Lactobacillus johnsonii (strain CNCM I-12250 / La1 / NCC 533), this protein is UPF0398 protein LJ_1195.